Here is a 427-residue protein sequence, read N- to C-terminus: Adenylosuccinate synthetase (427 aa).

Residues 12-18 (GDEGKGK) and 40-42 (GHT) each bind GTP. Aspartate 13 (proton acceptor) is an active-site residue. Residues aspartate 13 and glycine 40 each coordinate Mg(2+). IMP-binding positions include 13–16 (DEGK), 38–41 (NAGH), threonine 128, arginine 142, glutamine 223, threonine 238, and arginine 302. Residue histidine 41 is the Proton donor of the active site. 298–304 (TTTGRAR) contributes to the substrate binding site. Residues arginine 304, 330–332 (KLD), and 412–414 (AVG) contribute to the GTP site.

The protein belongs to the adenylosuccinate synthetase family. As to quaternary structure, homodimer. The cofactor is Mg(2+).

It localises to the cytoplasm. It catalyses the reaction IMP + L-aspartate + GTP = N(6)-(1,2-dicarboxyethyl)-AMP + GDP + phosphate + 2 H(+). The protein operates within purine metabolism; AMP biosynthesis via de novo pathway; AMP from IMP: step 1/2. Functionally, plays an important role in the de novo pathway of purine nucleotide biosynthesis. Catalyzes the first committed step in the biosynthesis of AMP from IMP. This chain is Adenylosuccinate synthetase, found in Desulfitobacterium hafniense (strain DSM 10664 / DCB-2).